The primary structure comprises 585 residues: Complement component C8 alpha chain (585 aa).

An N-terminal signal peptide occupies residues 1-20; sequence MLVAAFFTLFLVTCQPAVTA. The propeptide occupies 21 to 30; that stretch reads QEKVNQRVNR. Residues 38–91 form the TSP type-1 1 domain; it reads DCQLSSWSEWTDCFPCQDTKYRHRSLLQPNKFGGTICSGDIWDRASCYSPTACL. Disulfide bonds link C39/C74, C50/C84, C53/C90, C96/C108, C102/C121, C115/C130, and C140/C177. W44 carries C-linked (Man) tryptophan glycosylation. Positions 94–132 constitute an LDL-receptor class A domain; that stretch reads AQCGQDFQCKETGRCLKRHLVCNGENDCLDGSDEDNCED. 6 residues coordinate Ca(2+): L113, N116, E118, D120, D126, and E127. An MACPF domain is found at 136 to 499; it reads TESDCAQYDP…QYLMEFNACR (364 aa). A run of 4 beta stranded transmembrane segments spans residues 248–256, 259–266, 377–384, and 391–396; these read AGVTISAGL, SPLLGTVG, GGFGEIQY, and AQGILS. C375 and C400 form a disulfide bridge. N438 carries an N-linked (GlcNAc...) asparagine glycan. Intrachain disulfides connect C498-C545, C500-C516, C503-C518, and C520-C529. The EGF-like domain occupies 499-530; sequence RCGPCFNNGKPILEGTSCRCQCSLGLQGPACE. Residues 540-584 form the TSP type-1 2 domain; that stretch reads DGHWSCWGSWSPCTAGTRERRRECNNPAPQNGGAPCPGWRVQTQA. C-linked (Man) tryptophan glycans are attached at residues W543, W546, and W549. 2 disulfides stabilise this stretch: C552-C585 and C563-C575.

Belongs to the complement C6/C7/C8/C9 family. As to quaternary structure, heterotrimer of 3 chains: alpha (C8A), beta (C8B) and gamma (C8G); the alpha and gamma chains are disulfide bonded. Component of the membrane attack complex (MAC), composed of complement C5b, C6, C7, C8A, C8B, C8G and multiple copies of the pore-forming subunit C9.

Its subcellular location is the secreted. The protein localises to the target cell membrane. Its activity is regulated as follows. Membrane attack complex (MAC) assembly is inhibited by CD59, thereby protecting self-cells from damage during complement activation. CD59 acts by binding to the beta-haipins of C8 (C8A and C8B), forming an intermolecular beta-sheet that prevents incorporation of the multiple copies of C9 required for complete formation of the osmolytic pore. MAC assembly is also inhibited by clusterin (CLU) chaperones that inhibit polymerization of C9. In terms of biological role, component of the membrane attack complex (MAC), a multiprotein complex activated by the complement cascade, which inserts into a target cell membrane and forms a pore, leading to target cell membrane rupture and cell lysis. The MAC is initiated by proteolytic cleavage of C5 into complement C5b in response to the classical, alternative, lectin and GZMK complement pathways. The complement pathways consist in a cascade of proteins that leads to phagocytosis and breakdown of pathogens and signaling that strengthens the adaptive immune system. C8A, together with C8B and C8G, inserts into the target membrane, but does not form pores by itself. During MAC assembly, associates with C5b, C6 and C7 to form the C5b8 intermediate complex that inserts into the target membrane and traverses the bilayer increasing membrane rigidity. This chain is Complement component C8 alpha chain (C8A), found in Oryctolagus cuniculus (Rabbit).